Reading from the N-terminus, the 843-residue chain is Taste receptor type 1 member 2 (843 aa).

The first 19 residues, 1-19 (MGPQARTLCLLSLLLHVLP), serve as a signal peptide directing secretion. Residues 20 to 570 (KPGKLVENSD…TFLEWHEVPT (551 aa)) are Extracellular-facing. N-linked (GlcNAc...) asparagine glycans are attached at residues Asn87, Asn296, Asn316, Asn355, Asn372, Asn432, Asn484, Asn491, and Asn531. Residues 571-591 (IVVAILAALGFFSTLAILFIF) traverse the membrane as a helical segment. Residues 592 to 606 (WRHFQTPMVRSAGGP) are Cytoplasmic-facing. The helical transmembrane segment at 607–627 (MCFLMLVPLLLAFGMVPVYVG) threads the bilayer. Residues 628-642 (PPTVFSCFCRQAFFT) lie on the Extracellular side of the membrane. The helical transmembrane segment at 643–663 (VCFSICLSCITVRSFQIVCVF) threads the bilayer. The Cytoplasmic segment spans residues 664–682 (KMARRLPSAYSFWMRYHGP). The helical transmembrane segment at 683-703 (YVFVAFITAIKVALVVGNMLA) threads the bilayer. At 704–731 (TTINPIGRTDPDDPNIMILSCHPNYRNG) the chain is on the extracellular side. Residues 732-752 (LLFNTSMDLLLSVLGFSFAYM) traverse the membrane as a helical segment. Residues 753–764 (GKELPTNYNEAK) lie on the Cytoplasmic side of the membrane. The helical transmembrane segment at 765–785 (FITLSMTFSFTSSISLCTFMS) threads the bilayer. Over 786–789 (VHDG) the chain is Extracellular. A helical transmembrane segment spans residues 790–810 (VLVTIMDLLVTVLNFLAIGLG). At 811–843 (YFGPKCYMILFYPERNTSAYFNSMIQGYTMRKS) the chain is on the cytoplasmic side.

It belongs to the G-protein coupled receptor 3 family. TAS1R subfamily. Forms heterodimers with TAS1R3. Abundantly expressed in circumvallate and foliate papillae.

The protein resides in the cell membrane. In terms of biological role, putative taste receptor. TAS1R2/TAS1R3 recognizes diverse natural and synthetic sweeteners. This chain is Taste receptor type 1 member 2 (Tas1r2), found in Rattus norvegicus (Rat).